A 199-amino-acid polypeptide reads, in one-letter code: Large ribosomal subunit protein bL9 (199 aa).

The tract at residues 153–199 is disordered; that stretch reads KPVKASEKKGRRPRRDEEASDEQILAEENSVTEEAVSEEIQNSESEN.

This sequence belongs to the bacterial ribosomal protein bL9 family.

Its function is as follows. Binds to the 23S rRNA. The sequence is that of Large ribosomal subunit protein bL9 from Treponema denticola (strain ATCC 35405 / DSM 14222 / CIP 103919 / JCM 8153 / KCTC 15104).